The chain runs to 449 residues: Phosphoglucosamine mutase (449 aa).

S101 serves as the catalytic Phosphoserine intermediate. Residues S101, D242, D244, and D246 each contribute to the Mg(2+) site. A Phosphoserine modification is found at S101.

The protein belongs to the phosphohexose mutase family. Requires Mg(2+) as cofactor. In terms of processing, activated by phosphorylation.

The catalysed reaction is alpha-D-glucosamine 1-phosphate = D-glucosamine 6-phosphate. Its function is as follows. Catalyzes the conversion of glucosamine-6-phosphate to glucosamine-1-phosphate. The protein is Phosphoglucosamine mutase of Hyphomonas neptunium (strain ATCC 15444).